The following is a 101-amino-acid chain: Small ribosomal subunit protein uS14 (101 aa).

Belongs to the universal ribosomal protein uS14 family. As to quaternary structure, part of the 30S ribosomal subunit. Contacts proteins S3 and S10.

Binds 16S rRNA, required for the assembly of 30S particles and may also be responsible for determining the conformation of the 16S rRNA at the A site. In Marinobacter nauticus (strain ATCC 700491 / DSM 11845 / VT8) (Marinobacter aquaeolei), this protein is Small ribosomal subunit protein uS14.